A 666-amino-acid polypeptide reads, in one-letter code: DNA mismatch repair protein MutL (666 aa).

It belongs to the DNA mismatch repair MutL/HexB family.

Functionally, this protein is involved in the repair of mismatches in DNA. It is required for dam-dependent methyl-directed DNA mismatch repair. May act as a 'molecular matchmaker', a protein that promotes the formation of a stable complex between two or more DNA-binding proteins in an ATP-dependent manner without itself being part of a final effector complex. This is DNA mismatch repair protein MutL from Clostridium botulinum (strain Kyoto / Type A2).